A 701-amino-acid polypeptide reads, in one-letter code: Polyribonucleotide nucleotidyltransferase (701 aa).

Positions 490 and 496 each coordinate Mg(2+). In terms of domain architecture, KH spans 557-616; the sequence is PKVVTMSINPDKIRDVIGPGGKKINEIIDETGVKLDIEQDGTIFIGAVDQAMINRAKEII. In terms of domain architecture, S1 motif spans 626-694; the sequence is GQVYHAKVKR…KQGRVNASHK (69 aa).

It belongs to the polyribonucleotide nucleotidyltransferase family. It depends on Mg(2+) as a cofactor.

The protein resides in the cytoplasm. It carries out the reaction RNA(n+1) + phosphate = RNA(n) + a ribonucleoside 5'-diphosphate. In terms of biological role, involved in mRNA degradation. Catalyzes the phosphorolysis of single-stranded polyribonucleotides processively in the 3'- to 5'-direction. This chain is Polyribonucleotide nucleotidyltransferase, found in Staphylococcus epidermidis (strain ATCC 12228 / FDA PCI 1200).